We begin with the raw amino-acid sequence, 734 residues long: Subtilisin-like protease (734 aa).

Residues 1–20 (MTCICIFSIAFLLSFHLTTA) form the signal peptide. Residues 28–109 (TYIVHVDKPD…AKLEKVLTLH (82 aa)) enclose the Inhibitor I9 domain. The Peptidase S8 domain occupies 114-591 (PNFLGLYQNM…AGHVNPSKAS (478 aa)). Catalysis depends on Asp-141, which acts as the Charge relay system. The N-linked (GlcNAc...) asparagine glycan is linked to Asn-172. His-199 acts as the Charge relay system in catalysis. N-linked (GlcNAc...) asparagine glycans are attached at residues Asn-222 and Asn-306. A PA domain is found at 357 to 442 (PLVYPGTSDE…THVGYAAGEM (86 aa)). 2 N-linked (GlcNAc...) asparagine glycosylation sites follow: Asn-448 and Asn-509. Ser-524 acts as the Charge relay system in catalysis. The N-linked (GlcNAc...) asparagine glycan is linked to Asn-652.

Belongs to the peptidase S8 family.

The protein localises to the secreted. It localises to the extracellular space. It is found in the apoplast. Its function is as follows. Required for arbuscular mycorrhiza (AM) development during AM symbiosis with AM fungi (e.g. Glomeromycota intraradices). In Petunia hybrida (Petunia), this protein is Subtilisin-like protease.